The chain runs to 509 residues: T-complex protein 11-like protein 1 (509 aa).

Over residues 1-12 the composition is skewed to basic and acidic residues; sequence MSENLDKSHVDE. A disordered region spans residues 1–57; it reads MSENLDKSHVDEAGEAEAAASEQGLEGALECSDETLQKKVKSDSPSSQRVGRPHSSP. Positions 16–30 are enriched in low complexity; the sequence is AEAAASEQGLEGALE. At S56 the chain carries Phosphoserine.

Belongs to the TCP11 family.

The polypeptide is T-complex protein 11-like protein 1 (Tcp11l1) (Mus musculus (Mouse)).